Here is a 674-residue protein sequence, read N- to C-terminus: Protein asunder (674 aa).

The stretch at 516–538 (HKAKDQYRLLYRELEQLIQLNAS) forms a coiled coil. The interval 560–579 (PSKSEAGTANLRSFTESPLS) is disordered. The segment covering 564 to 577 (EAGTANLRSFTESP) has biased composition (polar residues). The Nuclear localization signal (NLS) signature appears at 601 to 607 (LKASKRR).

This sequence belongs to the Integrator subunit 13 family. Belongs to the multiprotein complex Integrator, at least composed of IntS1, IntS2, IntS3, IntS4, omd/IntS5, IntS6, defl/IntS7, IntS8, IntS9, IntS10, IntS11, IntS12, asun/IntS13, IntS14 and IntS15. The core complex associates with protein phosphatase 2A subunits mts/PP2A and Pp2A-29B, to form the Integrator-PP2A (INTAC) complex. Phosphorylated.

It is found in the nucleus. The protein resides in the cytoplasm. Its subcellular location is the perinuclear region. Its function is as follows. Component of the integrator complex, a multiprotein complex that terminates RNA polymerase II (Pol II) transcription in the promoter-proximal region of genes. The integrator complex provides a quality checkpoint during transcription elongation by driving premature transcription termination of transcripts that are unfavorably configured for transcriptional elongation: the complex terminates transcription by (1) catalyzing dephosphorylation of the C-terminal domain (CTD) of Pol II subunit Polr2A/Rbp1 and Spt5, and (2) degrading the exiting nascent RNA transcript via endonuclease activity. The integrator complex is also involved in the 3'-end processing of the U7 snRNA, and also the spliceosomal snRNAs U1, U2, U4 and U5. The polypeptide is Protein asunder (asun) (Drosophila pseudoobscura pseudoobscura (Fruit fly)).